Consider the following 282-residue polypeptide: Bifunctional protein FolD (282 aa).

NADP(+) contacts are provided by residues 166–168 (GRS) and Ser191.

This sequence belongs to the tetrahydrofolate dehydrogenase/cyclohydrolase family. As to quaternary structure, homodimer.

It carries out the reaction (6R)-5,10-methylene-5,6,7,8-tetrahydrofolate + NADP(+) = (6R)-5,10-methenyltetrahydrofolate + NADPH. The enzyme catalyses (6R)-5,10-methenyltetrahydrofolate + H2O = (6R)-10-formyltetrahydrofolate + H(+). Its pathway is one-carbon metabolism; tetrahydrofolate interconversion. Its function is as follows. Catalyzes the oxidation of 5,10-methylenetetrahydrofolate to 5,10-methenyltetrahydrofolate and then the hydrolysis of 5,10-methenyltetrahydrofolate to 10-formyltetrahydrofolate. The protein is Bifunctional protein FolD of Acidovorax sp. (strain JS42).